Reading from the N-terminus, the 134-residue chain is UPF0412 protein YaaI (134 aa).

Residues 1–23 (MKSVFTISASLAISLMLCCTAQA) form the signal peptide.

This sequence belongs to the UPF0412 family.

This is UPF0412 protein YaaI from Escherichia coli (strain K12).